A 105-amino-acid polypeptide reads, in one-letter code: Pyruvate synthase subunit PorD (105 aa).

4Fe-4S ferredoxin-type domains follow at residues 44–73 (FKPE…LDEE) and 74–103 (GYPV…MVRE). Cys-53, Cys-56, Cys-59, Cys-63, Cys-83, Cys-86, Cys-89, and Cys-93 together coordinate [4Fe-4S] cluster.

In terms of assembly, heterotetramer of one alpha, one beta, one delta and one gamma chain. [4Fe-4S] cluster serves as cofactor.

This chain is Pyruvate synthase subunit PorD (porD), found in Pyrococcus horikoshii (strain ATCC 700860 / DSM 12428 / JCM 9974 / NBRC 100139 / OT-3).